The sequence spans 479 residues: Anaerobic nitric oxide reductase flavorubredoxin (479 aa).

The tract at residues 30–210 is zinc metallo-hydrolase; that stretch reads LRGSSYNSYL…PFSRLVTPKI (181 aa). The Fe cation site is built by H79, E81, D83, H147, D166, and H227. The Flavodoxin-like domain maps to 254–393; that stretch reads ITIFYDTMSN…LCREHGREIA (140 aa). FMN is bound by residues 260 to 264 and 342 to 369; these read TMSNN and AFGS…EMSL. The region spanning 423–474 is the Rubredoxin-like domain; it reads GPRMQCSVCQWIYDPAKGEPMQDVAPGTPWSEVPDNFLCPECSLGKDVFDEL. Fe cation contacts are provided by C428, C431, C461, and C464.

It in the N-terminal section; belongs to the zinc metallo-hydrolase group 3 family. In terms of assembly, homotetramer. It depends on Fe cation as a cofactor. FMN is required as a cofactor.

It localises to the cytoplasm. It functions in the pathway nitrogen metabolism; nitric oxide reduction. In terms of biological role, anaerobic nitric oxide reductase; uses NADH to detoxify nitric oxide (NO), protecting several 4Fe-4S NO-sensitive enzymes. Has at least 2 reductase partners, only one of which (NorW, flavorubredoxin reductase) has been identified. NO probably binds to the di-iron center; electrons enter from the NorW at rubredoxin and are transferred sequentially to the FMN center and the di-iron center. Also able to function as an aerobic oxygen reductase. The polypeptide is Anaerobic nitric oxide reductase flavorubredoxin (Shigella sonnei (strain Ss046)).